A 118-amino-acid polypeptide reads, in one-letter code: Small ribosomal subunit protein uS13 (118 aa).

Residues 91 to 118 (HRRSLPVRGQRTKTNARTRKGPRKPIKA) are disordered.

It belongs to the universal ribosomal protein uS13 family. In terms of assembly, part of the 30S ribosomal subunit. Forms a loose heterodimer with protein S19. Forms two bridges to the 50S subunit in the 70S ribosome.

In terms of biological role, located at the top of the head of the 30S subunit, it contacts several helices of the 16S rRNA. In the 70S ribosome it contacts the 23S rRNA (bridge B1a) and protein L5 of the 50S subunit (bridge B1b), connecting the 2 subunits; these bridges are implicated in subunit movement. Contacts the tRNAs in the A and P-sites. This chain is Small ribosomal subunit protein uS13, found in Francisella philomiragia subsp. philomiragia (strain ATCC 25017 / CCUG 19701 / FSC 153 / O#319-036).